The sequence spans 183 residues: UPF0397 protein VFMJ11_1662 (183 aa).

Transmembrane regions (helical) follow at residues 8–28, 41–61, 75–95, 110–130, and 147–167; these read VVVI…MFGI, AVLA…VGFI, WLTW…FPII, FLIF…TSAF, and LCII…FILN.

The protein belongs to the UPF0397 family.

It localises to the cell membrane. This Aliivibrio fischeri (strain MJ11) (Vibrio fischeri) protein is UPF0397 protein VFMJ11_1662.